The primary structure comprises 670 residues: MAHKKQAWAKRVKKERFKKKYLTRMQATRLLQMESIQFRRLCILKGVYPRALTRSKQKQSGNEKQYYLAREIKWLVRDHIAEKMMTYRAWEKKVKRAEAMGRADDLKALQSSRVKPRHSLVATIKERYPYFIDAIRDVDDAMSMIHMYAFLSPEIKSESTIEIHHSLTSGLSEKAKEMCHRWNRYIARAHVLTKGFISIKGYYYEAIIKGERVRWLCPHEYAHRFPPGIQQYVMLSFLEFYLEMMKFVLFKLESDLARDEADRLAIEDEEGLTRANAEDFASGAALAVLDVGANQAQAKVKEAESKRSLMEEELLKVRELFRGLTFYISREVPAKHFALIINACGGRVATDYVASNITHVVVDRPALPPGWQQHDQMEYVQPQYIFDCLNARQMLPVTGYRIGEDLPPHVSPFSVSITNSAEDNAAVEQVKKDHPRIVGYVPARVHEIRKLINPSYSPVDPEGKVAQLEDEYSDEEMHVAVPEMDMEDDVSLSGDELAEARKKPGWQEEEVTEEVQRPKLSAFKVKKQREMNLMNAPTNEVVARRRQALRKAQENLRQSETPEARLQRKMSEVKRQEAVTRKMQLQVARKKAARFYKMVSGVVQGTAKKAATLEAKAKHIAEGKLHKTEDGKGLVNARLAARRQRAEAKGKKLKEKKADNPYKKLPKWVQ.

Residues 292–321 (GANQAQAKVKEAESKRSLMEEELLKVRELF) are a coiled coil. The region spanning 316 to 402 (KVRELFRGLT…QMLPVTGYRI (87 aa)) is the BRCT domain. The tract at residues 643–670 (RQRAEAKGKKLKEKKADNPYKKLPKWVQ) is disordered. Residues 644–662 (QRAEAKGKKLKEKKADNPY) show a composition bias toward basic and acidic residues.

This sequence belongs to the pescadillo family.

It localises to the nucleus. Its subcellular location is the nucleolus. The protein resides in the nucleoplasm. In terms of biological role, required for maturation of ribosomal RNAs and formation of the large ribosomal subunit. This Leishmania braziliensis protein is Pescadillo homolog.